The sequence spans 264 residues: uncharacterized protein (264 aa).

Residues Leu7–Thr27 form a helical membrane-spanning segment.

The protein belongs to the staphylococcal tandem lipoprotein family.

Its subcellular location is the cell membrane. This is an uncharacterized protein from Staphylococcus aureus (strain MRSA252).